A 386-amino-acid chain; its full sequence is Putrescine N-methyltransferase 4 (386 aa).

Polar residues-rich tracts occupy residues 1–14, 23–48, and 57–87; these read MEVISTNTNGSTIF, GHQSGTSKHLNGYQNGTSKHQNGHHN, and HQNGISEHQNGHQNGTSEQQNGTISHDNGNE. The interval 1 to 87 is disordered; it reads MEVISTNTNG…GTISHDNGNE (87 aa). Positions 97 to 334 constitute a PABS domain; the sequence is LGWFSEFSAL…GVIGYMLCST (238 aa). S-adenosyl-L-methionine-binding positions include Q128, E203, and 234-235; that span reads DG. The Proton acceptor role is filled by D253. Y322 lines the S-adenosyl-L-methionine pocket.

The protein belongs to the class I-like SAM-binding methyltransferase superfamily. Putrescine methyltransferase family. In terms of tissue distribution, predominantly expressed in roots.

The catalysed reaction is putrescine + S-adenosyl-L-methionine = N-methylputrescine + S-adenosyl-L-homocysteine + H(+). Its pathway is alkaloid biosynthesis; nicotine biosynthesis. Involved in the biosynthesis of pyridine alkaloid natural products, leading mainly to the production of anabasine, anatabine, nicotine and nornicotine, effective deterrents against herbivores with antiparasitic and pesticide properties (neurotoxins); nornicotine serves as the precursor in the synthesis of the carcinogen compound N'-nitrosonornicotine (NNN). Methyltransferase that mediates the conversion of putrescine to N-methylputrescine. Promotes leaves ripening. This is Putrescine N-methyltransferase 4 from Nicotiana tabacum (Common tobacco).